We begin with the raw amino-acid sequence, 275 residues long: Tryptophan synthase alpha chain (275 aa).

Active-site proton acceptor residues include glutamate 58 and aspartate 69.

It belongs to the TrpA family. As to quaternary structure, tetramer of two alpha and two beta chains. Ubiquitously expressed at low levels in seedlings, roots, hypocotyls, cotyledons, stems, leaves, inflorescences, flowers, siliques and seeds.

It localises to the cytoplasm. It carries out the reaction (1S,2R)-1-C-(indol-3-yl)glycerol 3-phosphate + L-serine = D-glyceraldehyde 3-phosphate + L-tryptophan + H2O. It catalyses the reaction (1S,2R)-1-C-(indol-3-yl)glycerol 3-phosphate = indole + D-glyceraldehyde 3-phosphate. The protein operates within amino-acid biosynthesis; L-tryptophan biosynthesis; L-tryptophan from chorismate: step 5/5. Functionally, the alpha subunit is responsible for the aldol cleavage of indoleglycerol phosphate to indole and glyceraldehyde 3-phosphate. Contributes to the tryptophan-independent indole biosynthesis, and possibly to auxin production. This is Tryptophan synthase alpha chain (TRPA1) from Arabidopsis thaliana (Mouse-ear cress).